Here is a 495-residue protein sequence, read N- to C-terminus: Probable cytosol aminopeptidase (495 aa).

Residues Lys267 and Asp272 each contribute to the Mn(2+) site. Lys279 is a catalytic residue. Residues Asp290, Asp349, and Glu351 each contribute to the Mn(2+) site. Arg353 is an active-site residue.

It belongs to the peptidase M17 family. Requires Mn(2+) as cofactor.

It is found in the cytoplasm. The enzyme catalyses Release of an N-terminal amino acid, Xaa-|-Yaa-, in which Xaa is preferably Leu, but may be other amino acids including Pro although not Arg or Lys, and Yaa may be Pro. Amino acid amides and methyl esters are also readily hydrolyzed, but rates on arylamides are exceedingly low.. It catalyses the reaction Release of an N-terminal amino acid, preferentially leucine, but not glutamic or aspartic acids.. In terms of biological role, presumably involved in the processing and regular turnover of intracellular proteins. Catalyzes the removal of unsubstituted N-terminal amino acids from various peptides. The polypeptide is Probable cytosol aminopeptidase (Histophilus somni (strain 129Pt) (Haemophilus somnus)).